The following is a 551-amino-acid chain: CTP synthase (551 aa).

The interval 1–267 is amidoligase domain; sequence MPKYVFVTGG…GRYVMEHLGW (267 aa). S13 is a binding site for CTP. S13 is a binding site for UTP. 14–19 is an ATP binding site; it reads SVGKGI. Y54 is an L-glutamine binding site. ATP is bound at residue D71. D71 and E141 together coordinate Mg(2+). CTP contacts are provided by residues 148-150, 188-193, and K224; these read DIE and KTKPTQ. Residues 188 to 193 and K224 each bind UTP; that span reads KTKPTQ. The Glutamine amidotransferase type-1 domain occupies 292-532; that stretch reads RIALVGKYVE…IGVAKHVLRE (241 aa). Residue G353 participates in L-glutamine binding. The Nucleophile; for glutamine hydrolysis role is filled by C380. L-glutamine contacts are provided by residues 381-384, E404, and R460; that span reads YGLH. Residues H505 and E507 contribute to the active site.

It belongs to the CTP synthase family. As to quaternary structure, homotetramer.

It carries out the reaction UTP + L-glutamine + ATP + H2O = CTP + L-glutamate + ADP + phosphate + 2 H(+). The catalysed reaction is L-glutamine + H2O = L-glutamate + NH4(+). The enzyme catalyses UTP + NH4(+) + ATP = CTP + ADP + phosphate + 2 H(+). The protein operates within pyrimidine metabolism; CTP biosynthesis via de novo pathway; CTP from UDP: step 2/2. Allosterically activated by GTP, when glutamine is the substrate; GTP has no effect on the reaction when ammonia is the substrate. The allosteric effector GTP functions by stabilizing the protein conformation that binds the tetrahedral intermediate(s) formed during glutamine hydrolysis. Inhibited by the product CTP, via allosteric rather than competitive inhibition. In terms of biological role, catalyzes the ATP-dependent amination of UTP to CTP with either L-glutamine or ammonia as the source of nitrogen. Regulates intracellular CTP levels through interactions with the four ribonucleotide triphosphates. The chain is CTP synthase from Thermomicrobium roseum (strain ATCC 27502 / DSM 5159 / P-2).